The sequence spans 35 residues: Z-limacoditoxin(1)-Dv4 (35 aa).

Positions 1–22 (MKKTFLPIFLVILLASYALGNP) are cleaved as a signal peptide. Position 23 is a pyrrolidone carboxylic acid (Gln23). Proline amide is present on Pro32.

This sequence belongs to the limacoditoxin-1 (ACP-like) family. Expressed by the venom secretory cell of the spine. The spine is a cuticular structure containing a single large nucleated venom-secreting cell at its base. It is an independent unit capable of producing, storing and injecting venom. On the back of D.vulnerans caterpillars, spines are grouped together by 50 to 100 to form scoli, of which there are eight in D.vulnerans.

It localises to the secreted. Its function is as follows. Potently activates insect GPCR. More precisely, it activates the ACP receptor (ACPR) from the mosquito A.aegypti (EC(50)=3.07 nM) with a potency comparable to that of the endogenous ligand. Has no activity on receptors of the closely related neuropeptides adipokinetic hormone and corazonin. In vivo, does not reveal any observable effects when injected into crickets (A.domesticus). Does not induce increase in intracellular calcium in mouse DRG neurons, suggesting that it does not induce pain. This Doratifera vulnerans (Mottled cup moth) protein is Z-limacoditoxin(1)-Dv4.